The chain runs to 370 residues: Sodium-dependent organic anion transporter (370 aa).

Positions 1–24 (MSADCEGNSTCPANSTEEDPPVGM) are disordered. At 1 to 32 (MSADCEGNSTCPANSTEEDPPVGMEGQGSLKL) the chain is on the extracellular side. 2 N-linked (GlcNAc...) asparagine glycosylation sites follow: Asn8 and Asn14. Residues 33 to 53 (VFTVLSAVMVGLVMFSFGCSV) form a helical membrane-spanning segment. The Cytoplasmic portion of the chain corresponds to 54-67 (ESRKLWLHLRRPWG). A helical transmembrane segment spans residues 68–88 (IAVGLLCQFGLMPLTAYLLAI). Residues 89–97 (GFGLKPFQA) are Extracellular-facing. Residues 98–118 (IAVLIMGSCPGGTVSNVLTFW) traverse the membrane as a helical segment. At 119-126 (VDGDMDLS) the chain is on the cytoplasmic side. The chain crosses the membrane as a helical span at residues 127–147 (ISMTTCSTVAALGMMPLCLYV). Residues 148–159 (YTRSWTLPQSLT) lie on the Extracellular side of the membrane. The helical transmembrane segment at 160–180 (IPYQSIGITLVSLVVPVASGI) threads the bilayer. Residues 181 to 195 (YVNYRWPKQATFILK) are Cytoplasmic-facing. Residues 196 to 216 (VGAAVGGMLLLVVAVTGVVLA) form a helical membrane-spanning segment. The Extracellular segment spans residues 217-224 (KGWNIDVT). A helical transmembrane segment spans residues 225-245 (LLVISCIFPLVGHVMGFLLAF). The Cytoplasmic portion of the chain corresponds to 246–265 (LTHQSWQRCRTISIETGAQN). A helical transmembrane segment spans residues 266 to 283 (IQLCIAMMQLSFSAEYLV). Residue Gln284 is a topological domain, extracellular. Residues 285 to 305 (LLNFALAYGLFQVLHGLLIVA) traverse the membrane as a helical segment. Residues 306–370 (AYQAYKRRQK…ELTSHVPSCE (65 aa)) lie on the Cytoplasmic side of the membrane.

It belongs to the bile acid:sodium symporter (BASS) (TC 2.A.28) family. Post-translationally, glycosylated. Highly expressed in heart, lung, spleen and adrenal gland. Moderately expressed in skeletal muscle, testis and small intestine.

The protein localises to the membrane. The catalysed reaction is estrone 3-sulfate(out) + 2 Na(+)(out) = estrone 3-sulfate(in) + 2 Na(+)(in). It catalyses the reaction 17beta-estradiol 3-sulfate(out) + 2 Na(+)(out) = 17beta-estradiol 3-sulfate(in) + 2 Na(+)(in). It carries out the reaction dehydroepiandrosterone 3-sulfate(out) + 2 Na(+)(out) = dehydroepiandrosterone 3-sulfate(in) + 2 Na(+)(in). The enzyme catalyses androst-5-ene-diol 3-sulfate(out) + 2 Na(+)(out) = androst-5-ene-diol 3-sulfate(in) + 2 Na(+)(in). The catalysed reaction is pregnenolone sulfate(out) + 2 Na(+)(out) = pregnenolone sulfate(in) + 2 Na(+)(in). It catalyses the reaction taurolithocholate 3-sulfate(out) + 2 Na(+)(out) = taurolithocholate 3-sulfate(in) + 2 Na(+)(in). It carries out the reaction androsterone 3alpha-sulfate(out) + 2 Na(+)(out) = androsterone 3alpha-sulfate(in) + 2 Na(+)(in). The enzyme catalyses 5alpha-dihydrotestosterone sulfate(out) + 2 Na(+)(out) = 5alpha-dihydrotestosterone sulfate(in) + 2 Na(+)(in). The catalysed reaction is 17beta-estradiol 17-sulfate(out) + 2 Na(+)(out) = 17beta-estradiol 17-sulfate(in) + 2 Na(+)(in). It catalyses the reaction 17alpha-hydroxypregnenolone 3-sulfate(out) + 2 Na(+)(out) = 17alpha-hydroxypregnenolone 3-sulfate(in) + 2 Na(+)(in). It carries out the reaction epiandrosterone 3-sulfate(out) + 2 Na(+)(out) = epiandrosterone 3-sulfate(in) + 2 Na(+)(in). The enzyme catalyses epitestosterone 17-sulfate(out) + 2 Na(+)(out) = epitestosterone 17-sulfate(in) + 2 Na(+)(in). The catalysed reaction is testosterone 17-sulfate(out) + 2 Na(+)(out) = testosterone 17-sulfate(in) + 2 Na(+)(in). It catalyses the reaction 16alpha-hydroxydehydroepiandrosterone 3-sulfate(out) + 2 Na(+)(out) = 16alpha-hydroxydehydroepiandrosterone 3-sulfate(in) + 2 Na(+)(in). Its function is as follows. Transports sulfoconjugated steroid hormones from the extracellular compartment into the cytosol in a sodium-dependent manner without hydrolysis. Steroid sulfate hormones are commonly considered to be biologically inactive metabolites, that may be activated by steroid sulfatases into free steroids. May play an important role by delivering sulfoconjugated steroids to specific target cells in reproductive organs. May play a role transporting the estriol precursor 16alpha-hydroxydehydroepiandrosterone 3-sulfate (16a-OH-DHEAS) at the fetal blood vessel endothelium. Can also transport other sulfoconjugated molecules such as taurolithocholic acid-3-sulfate and sulfoconjugated pyrenes. The chain is Sodium-dependent organic anion transporter (Slc10a6) from Rattus norvegicus (Rat).